The primary structure comprises 196 residues: Agamous-like MADS-box protein AGL31 (196 aa).

Residues 1-61 form the MADS-box domain; sequence MGRKKVEIKR…GKLYKSASGD (61 aa). The 91-residue stretch at 80 to 170 folds into the K-box domain; sequence ALDLAEKTRN…ASQVGKKTFL (91 aa).

In terms of tissue distribution, expressed in most plant tissues, roots, seedlings, leaves, stems, inflorescences, pollen, siliques and flowers.

It is found in the nucleus. Its function is as follows. Probable transcription factor that prevents vernalization by short periods of cold. Acts as a floral repressor. In Arabidopsis thaliana (Mouse-ear cress), this protein is Agamous-like MADS-box protein AGL31 (AGL31).